Here is a 391-residue protein sequence, read N- to C-terminus: Polyketide synthase 3 (391 aa).

The active site involves cysteine 164.

Belongs to the thiolase-like superfamily. Chalcone/stilbene synthases family. As to quaternary structure, homodimer.

It carries out the reaction (E)-4-coumaroyl-CoA + 3 malonyl-CoA + 3 H(+) = 2',4,4',6'-tetrahydroxychalcone + 3 CO2 + 4 CoA. Its pathway is secondary metabolite biosynthesis; flavonoid biosynthesis. Functionally, polyketide synthase producing p-coumaryltriacetic acid lactone (CTAL) and slightly naringenin chalcone. Can use p-coumaryl-CoA as substrate. In Rubus idaeus (Raspberry), this protein is Polyketide synthase 3 (PKS3).